A 356-amino-acid polypeptide reads, in one-letter code: MGANVLIMAGGTGGHVFPALACAREFQNRGYTVHWLGTPRGIENELVPNAGLPLHLINVTGLRGKGKLSLLKAPFVLLKAVWQARKVIRDVQPVCVLGFGGYVTGPGGVAAKLAGVPVIVHEQNAVAGTANRLLVPLAARVCEAFPNTFSASDKRRTTGNPVRTELFMDIARQALAGRKAHLLILGGSLGAEPLNKLLPEAVAQLPAELRPEIFHQAGKNHDEVTATRYREAGVEANVQPFIKDMAHAYGWADLVVCRAGALTVSELAAAGLPSLLVPLPHAIDDHQTRNAEYLAGEGAAFLLPQRTTGAADLAARLTEVLMQPERLNSMASTASRLAKPDATRTVVDICLEVAHG.

UDP-N-acetyl-alpha-D-glucosamine contacts are provided by residues 12–14 (TGG), Asn-124, Arg-163, Ser-188, Ile-242, 261–266 (ALTVSE), and Gln-287.

Belongs to the glycosyltransferase 28 family. MurG subfamily.

It is found in the cell inner membrane. It catalyses the reaction di-trans,octa-cis-undecaprenyl diphospho-N-acetyl-alpha-D-muramoyl-L-alanyl-D-glutamyl-meso-2,6-diaminopimeloyl-D-alanyl-D-alanine + UDP-N-acetyl-alpha-D-glucosamine = di-trans,octa-cis-undecaprenyl diphospho-[N-acetyl-alpha-D-glucosaminyl-(1-&gt;4)]-N-acetyl-alpha-D-muramoyl-L-alanyl-D-glutamyl-meso-2,6-diaminopimeloyl-D-alanyl-D-alanine + UDP + H(+). It participates in cell wall biogenesis; peptidoglycan biosynthesis. Functionally, cell wall formation. Catalyzes the transfer of a GlcNAc subunit on undecaprenyl-pyrophosphoryl-MurNAc-pentapeptide (lipid intermediate I) to form undecaprenyl-pyrophosphoryl-MurNAc-(pentapeptide)GlcNAc (lipid intermediate II). The sequence is that of UDP-N-acetylglucosamine--N-acetylmuramyl-(pentapeptide) pyrophosphoryl-undecaprenol N-acetylglucosamine transferase from Pseudomonas fluorescens (strain SBW25).